The primary structure comprises 414 residues: Histidine--tRNA ligase (414 aa).

Belongs to the class-II aminoacyl-tRNA synthetase family. Homodimer.

The protein localises to the cytoplasm. The enzyme catalyses tRNA(His) + L-histidine + ATP = L-histidyl-tRNA(His) + AMP + diphosphate + H(+). The chain is Histidine--tRNA ligase (hisS) from Mycoplasma pneumoniae (strain ATCC 29342 / M129 / Subtype 1) (Mycoplasmoides pneumoniae).